A 90-amino-acid chain; its full sequence is Acylphosphatase (90 aa).

The Acylphosphatase-like domain maps to 3 to 90 (QYHMIADGRV…KGYRTFSISY (88 aa)). Active-site residues include Arg-18 and Asn-36.

It belongs to the acylphosphatase family.

The catalysed reaction is an acyl phosphate + H2O = a carboxylate + phosphate + H(+). In Bacillus velezensis (strain DSM 23117 / BGSC 10A6 / LMG 26770 / FZB42) (Bacillus amyloliquefaciens subsp. plantarum), this protein is Acylphosphatase (acyP).